A 1566-amino-acid chain; its full sequence is Arginine-glutamic acid dipeptide repeats protein (1566 aa).

The span at 1–36 shows a compositional bias: basic and acidic residues; that stretch reads MTADKDKDKDKEKDRDRDRDREREKRDKARESENSR. Residues 1-90 form a disordered region; the sequence is MTADKDKDKD…KKKSRYERTD (90 aa). Ser53 and Ser56 each carry phosphoserine. The segment covering 74-85 has biased composition (basic residues); that stretch reads KNKKKPPKKKSR. One can recognise a BAH domain in the interval 103–283; the sequence is VVYRPGDCVY…PETRRLNSTQ (181 aa). Phosphothreonine is present on Thr120. Phosphoserine is present on residues Ser142 and Ser304. In terms of domain architecture, ELM2 spans 284-387; that stretch reads GEIRVGPSHQ…KALQRLVKKP (104 aa). An SANT domain is found at 391–443; that stretch reads LIEKCWTEDEVKRFVKGLRQYGKNFFRIRKELLPNKETGELITFYYYWKKTPE. Residues 464–495 are disordered; it reads TRTASTPVNTPSRPPSSEFLDLSSASEDDFDS. Residues 465-474 show a composition bias toward polar residues; the sequence is RTASTPVNTP. The span at 479–488 shows a compositional bias: low complexity; it reads SSEFLDLSSA. The segment at 507 to 532 adopts a GATA-type zinc-finger fold; that stretch reads CRHCFTTTSKDWHHGGRENILLCTDC. Residues 542 to 1133 form a disordered region; sequence LPPIEKPVDP…PSHASQSARF (592 aa). Lys560 is covalently cross-linked (Glycyl lysine isopeptide (Lys-Gly) (interchain with G-Cter in SUMO2)). Ser594, Ser600, and Ser613 each carry phosphoserine. Positions 609–623 are enriched in low complexity; that stretch reads SGRNSPSAASTSSND. Positions 624 to 640 are enriched in basic and acidic residues; that stretch reads SKAETVKKSAKKVKEEA. A Glycyl lysine isopeptide (Lys-Gly) (interchain with G-Cter in SUMO2) cross-link involves residue Lys637. 4 positions are modified to phosphoserine: Ser642, Ser656, Ser675, and Ser679. Residues 652-673 show a composition bias toward basic and acidic residues; the sequence is EKVASDTEEADRTSSKKTKTQE. The span at 688-708 shows a compositional bias: basic and acidic residues; the sequence is SDSRSVNDEGSSDPKDIDQDN. Over residues 709–720 the composition is skewed to polar residues; it reads RSTSPSIPSPQD. The span at 726–751 shows a compositional bias: low complexity; the sequence is DSSAQQQMLQAQPPALQAPTGVTPAP. Residues 752–767 are compositionally biased toward pro residues; that stretch reads SSAPPGTPQLPTPGPT. Residues 778–796 are compositionally biased toward low complexity; that stretch reads SPTASQAPNQPQAPTAPVP. Residues 809–827 show a composition bias toward pro residues; that stretch reads QRPPSPHPPPHPSPHPPLQ. A compositionally biased stretch (polar residues) spans 829–840; sequence LTGSAGQPSAPS. Composition is skewed to low complexity over residues 843-865 and 897-913; these read QPPL…LLQH and SLQL…QQPP. Over residues 914–940 the composition is skewed to pro residues; that stretch reads REQPLPPAPLAMPHIKPPPTTPIPQLP. The segment covering 970-980 has biased composition (low complexity); that stretch reads KPLSSLSTHHP. The span at 1030 to 1052 shows a compositional bias: pro residues; that stretch reads PQPPFAQHPFVPGGPPPITPPTC. Residues 1053-1085 are compositionally biased toward low complexity; it reads PSTSTPPAGPGTSAQPPCSGAAASGGSIAGGSS. Phosphoserine is present on residues Ser1106, Ser1113, and Ser1115. Over residues 1106–1117 the composition is skewed to pro residues; it reads SPPPPPRSPSPE. A Phosphothreonine modification is found at Thr1119. A coiled-coil region spans residues 1156–1211; the sequence is GSKLAKKREEAIEKAKREAEQKAREEREREKEKEKEREREREREREAERAAKASSS. At Lys1158 the chain carries N6-acetyllysine. Basic and acidic residues predominate over residues 1162–1206; the sequence is KREEAIEKAKREAEQKAREEREREKEKEKEREREREREREAERAA. Residues 1162–1246 form a disordered region; that stretch reads KREEAIEKAK…TTIAAVPPYI (85 aa). Tyr1259 is modified (phosphotyrosine). Ser1266 carries the post-translational modification Phosphoserine.

Interacts with HDAC1. Interacts with ATN1. Interaction with ATN1 is improved when the poly-Gln region of ATN1 is extended. Interacts with FAT1. In terms of tissue distribution, widely expressed. Expressed in tumor cell lines.

The protein localises to the nucleus. Its function is as follows. Plays a role as a transcriptional repressor during development. May play a role in the control of cell survival. Overexpression of RERE recruits BAX to the nucleus particularly to POD and triggers caspase-3 activation, leading to cell death. The protein is Arginine-glutamic acid dipeptide repeats protein (RERE) of Homo sapiens (Human).